A 1210-amino-acid chain; its full sequence is Inner capsid protein VP3 (1210 aa).

A disordered region spans residues 1 to 28 (MPRTSRNVRATEVATTAIPPSNAATDTT). Residues 113–136 (LRCQQCGAKFSSMTQLAEHVRTEH) form a C2H2-type zinc finger. Residues 294–319 (PHAGPQVRSVQSQDQQVYSVDSGPDP) form a disordered region. Low complexity predominate over residues 299–315 (QVRSVQSQDQQVYSVDS).

Belongs to the turreted BTV-fold inner capsid family. As to quaternary structure, homodecamer; each decamer is made up of two conformers of VP2, called VP2A and VP2B. 12 homodecamers assemble to form an icosahedral capsid. Interacts with VP6.

It is found in the virion. In terms of biological role, inner capsid protein that self-assembles to form an icosahedral capsid with a T=2 symmetry, which consists of 120 copies of VP2, with channels at each of its five-fold vertices. This capsid constitutes the innermost concentric layer of the viral mature particle. The chain is Inner capsid protein VP3 (S3) from Aquareovirus A (isolate Chum salmon/Japan/CSRV/1981) (AQRV-A).